The sequence spans 180 residues: Dual-action ribosomal maturation protein DarP (180 aa).

The protein belongs to the DarP family.

It localises to the cytoplasm. In terms of biological role, member of a network of 50S ribosomal subunit biogenesis factors which assembles along the 30S-50S interface, preventing incorrect 23S rRNA structures from forming. Promotes peptidyl transferase center (PTC) maturation. The protein is Dual-action ribosomal maturation protein DarP of Chromobacterium violaceum (strain ATCC 12472 / DSM 30191 / JCM 1249 / CCUG 213 / NBRC 12614 / NCIMB 9131 / NCTC 9757 / MK).